The chain runs to 265 residues: Small ribosomal subunit protein uS3 (265 aa).

Positions 39-107 constitute a KH type-2 domain; the sequence is VREFLKKKLK…PVHVNIEEIR (69 aa). A disordered region spans residues 211–265; that stretch reads NDAPVVEEPQEDRRRRPGRPEGRRREGEGRPAGNRRGGAGAGRRAAPGADAKSGE. Over residues 221 to 239 the composition is skewed to basic and acidic residues; the sequence is EDRRRRPGRPEGRRREGEG.

This sequence belongs to the universal ribosomal protein uS3 family. Part of the 30S ribosomal subunit. Forms a tight complex with proteins S10 and S14.

Its function is as follows. Binds the lower part of the 30S subunit head. Binds mRNA in the 70S ribosome, positioning it for translation. This Cupriavidus metallidurans (strain ATCC 43123 / DSM 2839 / NBRC 102507 / CH34) (Ralstonia metallidurans) protein is Small ribosomal subunit protein uS3.